A 286-amino-acid polypeptide reads, in one-letter code: DegV domain-containing protein SPs1668 (286 aa).

Positions 3–282 (FTIMTDSTAD…PNTLAVFVIG (280 aa)) constitute a DegV domain. Hexadecanoate is bound by residues threonine 62 and serine 94.

In terms of biological role, may bind long-chain fatty acids, such as palmitate, and may play a role in lipid transport or fatty acid metabolism. The chain is DegV domain-containing protein SPs1668 from Streptococcus pyogenes serotype M3 (strain SSI-1).